Consider the following 3046-residue polypeptide: Nucleosome-remodeling factor subunit BPTF (3046 aa).

Residues 1 to 232 are disordered; sequence MRGRRGRPPK…DIPPLEFPKS (232 aa). Residues 22-33 show a composition bias toward pro residues; sequence PAPPPPPPPPTS. Residues 62 to 72 are compositionally biased toward low complexity; the sequence is TRLSSPRGGSS. The span at 78–87 shows a compositional bias: pro residues; that stretch reads PPPPPAPPST. Over residues 91 to 110 the composition is skewed to gly residues; that stretch reads GRGGRGGGGGRTGGGGGGGH. Acidic residues predominate over residues 129–186; it reads HESEEEEEEEDMVSEEEEEEDGDAEETQDSEDDEEDEMEEDDDDSDYPEEMEDDDDDA. Positions 190-203 are enriched in low complexity; that stretch reads TESSFRSHSTYSST. Positions 205 to 215 are enriched in basic residues; sequence GRRKPRVHRPR. Ser-216 bears the Phosphoserine mark. The 61-residue stretch at 240-300 folds into the DDT domain; it reads NEHIMNVIAI…LKAVLREEDT (61 aa). The segment at 390 to 437 adopts a PHD-type 1 zinc-finger fold; that stretch reads DDHCRVCHKLGDLLCCETCSAVYHLECVKPPLEEVPEDEWQCEVCVAH. Composition is skewed to basic and acidic residues over residues 567–609 and 616–628; these read IDNV…SDDK and EQGK…EVGD. A disordered region spans residues 567-774; it reads IDNVKSPEET…GAGKGASGST (208 aa). Phosphoserine is present on Ser-572. Residues 574-604 adopt a coiled-coil conformation; that stretch reads EETEKDKNETENDSKDAEKNREEFEDQSLEK. Polar residues-rich tracts occupy residues 631–653 and 690–705; these read NSVS…SPSE and TCES…SIQP. Residues 640–749 are interaction with KEAP1; it reads NTTNATSEET…PVSIQEEIVG (110 aa). The span at 706–723 shows a compositional bias: low complexity; it reads NLENSNSSSELNSSQSES. The segment covering 725–738 has biased composition (basic and acidic residues); the sequence is KAADDPENGERESH. Residues Ser-763 and Ser-817 each carry the phosphoserine modification. Residues 839 to 921 form an interaction with MAZ region; it reads YFKLGQEGKY…QLENNIPSSF (83 aa). Residue Lys-880 is modified to N6-acetyllysine. A coiled-coil region spans residues 978-1007; that stretch reads MTSIEREEKEKVKKKEKKQEEEETMQQATW. Residues 1057–1157 form a disordered region; that stretch reads YRKSLEGTKN…MKTESHVNCQ (101 aa). Thr-1064 is subject to Phosphothreonine. 2 stretches are compositionally biased toward basic and acidic residues: residues 1087 to 1102 and 1113 to 1152; these read IKIE…KGSD and DISK…KTES. Residues Lys-1088, Lys-1138, and Lys-1209 each participate in a glycyl lysine isopeptide (Lys-Gly) (interchain with G-Cter in SUMO2) cross-link. Disordered regions lie at residues 1215–1339, 1371–1448, 1465–1537, and 1605–1706; these read KGIG…GNDF, IVSS…FRTR, GEST…NGKD, and NSSE…GESK. 3 stretches are compositionally biased toward polar residues: residues 1220–1232, 1242–1257, and 1266–1285; these read TSTN…SESP, QSDS…ANND, and CSES…TTNK. A Phosphoserine modification is found at Ser-1231. Over residues 1287 to 1305 the composition is skewed to basic and acidic residues; that stretch reads YPKDRVLDDVSIRSPETKC. Ser-1300 is subject to Phosphoserine. A Phosphothreonine modification is found at Thr-1303. A Phosphoserine modification is found at Ser-1310. The segment covering 1372-1386 has biased composition (low complexity); that stretch reads VSSSKSALHSSVPKS. Composition is skewed to polar residues over residues 1409-1426 and 1434-1444; these read SESN…SIQD and VQNSNESISEQ. The span at 1491–1525 shows a compositional bias: basic and acidic residues; it reads KKLEERPVNKCSDQIKLKNTTDKKNNENRESEKKG. The span at 1629-1656 shows a compositional bias: polar residues; the sequence is TLPSTKESDSTQTTTPSASCPESNSVNQ. A Glycyl lysine isopeptide (Lys-Gly) (interchain with G-Cter in SUMO2) cross-link involves residue Lys-1730. Disordered regions lie at residues 1973 to 2003 and 2041 to 2070; these read VPET…TPKQ and QAKK…STIS. A coiled-coil region spans residues 2022–2050; the sequence is EIRAFAERVEKEKAQAVEQQAKKRLEQQK. The span at 2054-2070 shows a compositional bias: low complexity; that stretch reads IATSTTSPTSSTTSTIS. The residue at position 2098 (Ser-2098) is a Phosphoserine. Residue Arg-2155 is modified to Omega-N-methylarginine. The disordered stretch occupies residues 2160 to 2180; that stretch reads TIRPNTSGSGGTTSNSQVITG. Arg-2162, Arg-2184, and Arg-2191 each carry asymmetric dimethylarginine. A compositionally biased stretch (polar residues) spans 2232–2256; sequence VSAPNTVSSTPGQKSLTSATSTSNI. Disordered regions lie at residues 2232–2270, 2346–2549, 2714–2733, and 2795–2858; these read VSAP…QQGQ, TAST…RPQL, QAAK…SKQN, and PCPP…ISTT. Composition is skewed to low complexity over residues 2257-2270 and 2346-2362; these read QSSA…QQGQ and TAST…AGTG. Residues 2363-2375 show a composition bias toward polar residues; it reads EQRQSKLSPQMQV. The span at 2391-2431 shows a compositional bias: low complexity; sequence PAEAQPQTAQPSAQPQPQTQPQSPAQPEVQTQPEVQTQTTV. The segment covering 2432 to 2485 has biased composition (polar residues); it reads SSHVPSEAQPTHAQSSKPQVAAQSQPQSNVQGQSPVRVQSPSQTRIRPSTPSQL. A Phosphoserine modification is found at Ser-2465. The span at 2486 to 2538 shows a compositional bias: low complexity; it reads SPGQQSQVQTTTSQPIPIQPHTSLQIPSQGQPQSQPQVQSSTQTLSSGQTLNQ. Residues 2706-2732 are a coiled coil; the sequence is DKIDKEEKQAAKKRKREESVEQKRSKQ. Residues 2714-2729 show a composition bias toward basic and acidic residues; sequence QAAKKRKREESVEQKR. Residues 2795–2818 show a composition bias toward pro residues; sequence PCPPVTPAPPAPPAPPPSPPPPPA. Residues 2838 to 2847 show a composition bias toward basic and acidic residues; that stretch reads KREEEKDSSS. The PHD-type 2 zinc finger occupies 2867–2918; the sequence is KLYCICKTPYDESKFYIGCDRCQNWYHGRCVGILQSEAELIDEYVCPQCQST. Residues 2927–3031 enclose the Bromo domain; it reads PLTEKDYEGL…SFFVQKLKGF (105 aa).

This sequence belongs to the PBTF family. As to quaternary structure, interacts with MAZ. Interacts with KEAP1. Component of the NURF-1 ISWI chromatin remodeling complex (also called the nucleosome-remodeling factor (NURF) complex) at least composed of SMARCA1 (isoform 2), BPTF, RBBP4 and RBBP7. Within the complex interacts with isoform 2 of SMARCA1. Component of the BPFT-SMARCA1 complex at least composed of SMARCA1 (isoform 1), BPFT, RBBP4 and RBBP7; the complex is catalytically inactive and does not remodel chromatin. Within the complex interacts with isoform 1 of SMARCA1. Component of the NURF-5 ISWI chromatin remodeling complex at least composed of SMARCA5/SNF2H and BPTF. Within NURF-5 ISWI chromatin remodeling complex interacts with SMARCA5/SNF2H. Post-translationally, phosphorylation enhances DNA-binding. In terms of processing, highly susceptible to proteolysis. In terms of tissue distribution, ubiquitously expressed, with highest levels in testis. Present in kidney, liver and brain. In the brain, highest levels are found in motor cortex (at protein level).

Its subcellular location is the cytoplasm. It localises to the nucleus. Regulatory subunit of the ATP-dependent NURF-1 and NURF-5 ISWI chromatin remodeling complexes, which form ordered nucleosome arrays on chromatin and facilitate access to DNA during DNA-templated processes such as DNA replication, transcription, and repair. The NURF-1 ISWI chromatin remodeling complex has a lower ATP hydrolysis rate than the NURF-5 ISWI chromatin remodeling complex. Within the NURF-1 ISWI chromatin-remodeling complex, binds to the promoters of En1 and En2 to positively regulate their expression and promote brain development. Histone-binding protein which binds to H3 tails trimethylated on 'Lys-4' (H3K4me3), which mark transcription start sites of active genes. Binds to histone H3 tails dimethylated on 'Lys-4' (H3K4Me2) to a lesser extent. May also regulate transcription through direct binding to DNA or transcription factors. The protein is Nucleosome-remodeling factor subunit BPTF (BPTF) of Homo sapiens (Human).